The chain runs to 591 residues: Potassium-transporting ATPase potassium-binding subunit (591 aa).

10 consecutive transmembrane segments (helical) span residues 6-26, 63-83, 137-157, 179-199, 272-292, 303-323, 405-425, 444-464, 510-530, and 553-573; these read WFQI…LGVF, WTEY…MLYI, GLAY…IAFI, VLWV…SQGV, LSNL…TYTL, WAVW…VYWA, AGMY…GLMV, AMLV…ISSV, VAIG…MLAI, and LFSV…FFPA.

It belongs to the KdpA family. As to quaternary structure, the system is composed of three essential subunits: KdpA, KdpB and KdpC.

The protein localises to the cell inner membrane. In terms of biological role, part of the high-affinity ATP-driven potassium transport (or Kdp) system, which catalyzes the hydrolysis of ATP coupled with the electrogenic transport of potassium into the cytoplasm. This subunit binds the periplasmic potassium ions and delivers the ions to the membrane domain of KdpB through an intramembrane tunnel. The chain is Potassium-transporting ATPase potassium-binding subunit from Koribacter versatilis (strain Ellin345).